Consider the following 127-residue polypeptide: Small ribosomal subunit protein uS11 (127 aa).

It belongs to the universal ribosomal protein uS11 family. In terms of assembly, part of the 30S ribosomal subunit. Interacts with proteins S7 and S18. Binds to IF-3.

In terms of biological role, located on the platform of the 30S subunit, it bridges several disparate RNA helices of the 16S rRNA. Forms part of the Shine-Dalgarno cleft in the 70S ribosome. The sequence is that of Small ribosomal subunit protein uS11 from Rickettsia felis (strain ATCC VR-1525 / URRWXCal2) (Rickettsia azadi).